We begin with the raw amino-acid sequence, 392 residues long: Methylthioribose-1-phosphate isomerase (392 aa).

Catalysis depends on aspartate 267, which acts as the Proton donor.

Belongs to the eIF-2B alpha/beta/delta subunits family. MtnA subfamily.

Its subcellular location is the cytoplasm. It localises to the nucleus. It catalyses the reaction 5-(methylsulfanyl)-alpha-D-ribose 1-phosphate = 5-(methylsulfanyl)-D-ribulose 1-phosphate. The protein operates within amino-acid biosynthesis; L-methionine biosynthesis via salvage pathway; L-methionine from S-methyl-5-thio-alpha-D-ribose 1-phosphate: step 1/6. Catalyzes the interconversion of methylthioribose-1-phosphate (MTR-1-P) into methylthioribulose-1-phosphate (MTRu-1-P). The chain is Methylthioribose-1-phosphate isomerase from Blastomyces gilchristii (strain SLH14081) (Blastomyces dermatitidis).